A 547-amino-acid chain; its full sequence is Sterol carrier protein 2 (547 aa).

A phosphoserine mark is found at Ser3 and Ser8. Lys40 bears the N6-succinyllysine mark. Residue Lys132 is modified to N6-acetyllysine; alternate. At Lys132 the chain carries N6-succinyllysine; alternate. N6-succinyllysine is present on Lys168. Lys177 carries the N6-acetyllysine modification. N6-acetyllysine; alternate is present on Lys183. An N6-succinyllysine; alternate modification is found at Lys183. Lys211 and Lys282 each carry N6-succinyllysine. N6-acetyllysine; alternate occurs at positions 341, 432, 438, 443, and 453. Lys341, Lys432, Lys438, Lys443, and Lys453 each carry N6-succinyllysine; alternate. In terms of domain architecture, SCP2 spans 433–543; sequence ANLIFKEIEK…KLQSLQLQPD (111 aa). Lys464 carries the post-translational modification N6-succinyllysine. Lys470 carries the post-translational modification N6-acetyllysine; alternate. Position 470 is an N6-succinyllysine; alternate (Lys470). Lys479 carries the N6-succinyllysine modification. Lys491 carries the post-translational modification N6-acetyllysine. N6-succinyllysine occurs at positions 492 and 511. Ser516 is modified (phosphoserine). N6-succinyllysine is present on residues Lys522 and Lys534. At Ser537 the chain carries Phosphoserine. Lys544 carries the N6-succinyllysine modification. A Microbody targeting signal motif is present at residues 545–547; sequence AKL.

This sequence in the N-terminal section; belongs to the thiolase-like superfamily. Thiolase family. As to quaternary structure, interacts with PEX5; the interaction is essential for peroxisomal import. PreSCP2, a protein with a molecular mass of about 15 kDa, is processed into its mature form (SCP2) by proteolytic cleavage of a 20 residue leader sequence after translocation into peroxisomes. Liver &gt; intestine &gt; brain &gt; lung, colon, stomach, spleen, kidney, heart and ovary. In terms of tissue distribution, expressed in liver (at protein level).

The protein localises to the peroxisome. The protein resides in the cytoplasm. Its subcellular location is the mitochondrion. It catalyses the reaction an acyl-CoA + acetyl-CoA = a 3-oxoacyl-CoA + CoA. It carries out the reaction choloyl-CoA + propanoyl-CoA = 3alpha,7alpha,12alpha-trihydroxy-24-oxo-5beta-cholestan-26-oyl-CoA + CoA. The enzyme catalyses 4,8,12-trimethyltridecanoyl-CoA + propanoyl-CoA = 3-oxopristanoyl-CoA + CoA. The catalysed reaction is hexanoyl-CoA + acetyl-CoA = 3-oxooctanoyl-CoA + CoA. It catalyses the reaction tetradecanoyl-CoA + acetyl-CoA = 3-oxohexadecanoyl-CoA + CoA. It carries out the reaction 3-oxohexadecanedioyl-CoA + CoA = tetradecanedioyl-CoA + acetyl-CoA. The enzyme catalyses propanoyl-CoA + tetradecanoyl-CoA = 3-oxo-2-methylhexadecanoyl-CoA + CoA. The catalysed reaction is butanoyl-CoA + acetyl-CoA = 3-oxohexanoyl-CoA + CoA. It catalyses the reaction octanoyl-CoA + acetyl-CoA = 3-oxodecanoyl-CoA + CoA. It carries out the reaction decanoyl-CoA + acetyl-CoA = 3-oxododecanoyl-CoA + CoA. The enzyme catalyses dodecanoyl-CoA + acetyl-CoA = 3-oxotetradecanoyl-CoA + CoA. The catalysed reaction is hexadecanoyl-CoA + acetyl-CoA = 3-oxooctadecanoyl-CoA + CoA. It catalyses the reaction 3-oxo-(9Z-octadecenoyl)-CoA + CoA = (7Z)-hexadecenoyl-CoA + acetyl-CoA. It carries out the reaction 7-dehydrocholesterol(in) = 7-dehydrocholesterol(out). Its function is as follows. Plays a crucial role in the peroxisomal oxidation of branched-chain fatty acids. Catalyzes the last step of the peroxisomal beta-oxidation of branched chain fatty acids and the side chain of the bile acid intermediates di- and trihydroxycoprostanic acids (DHCA and THCA). Also active with medium and long straight chain 3-oxoacyl-CoAs. Stimulates the microsomal conversion of 7-dehydrocholesterol to cholesterol and transfers phosphatidylcholine and 7-dehydrocholesterol between membrances, in vitro. Isoforms SCP2 and SCPx cooperate in peroxisomal oxidation of certain naturally occurring tetramethyl-branched fatty acyl-CoAs. Functionally, mediates the transfer of all common phospholipids, cholesterol and gangliosides from the endoplasmic reticulum to the plasma membrane. May play a role in regulating steroidogenesis. Stimulates the microsomal conversion of 7-dehydrocholesterol to cholesterol. Also binds fatty acids and fatty acyl Coenzyme A (CoA) such as phytanoyl-CoA. Involved in the regulation phospholipid synthesis in endoplasmic reticulum enhancing the incorporation of exogenous fatty acid into glycerides. Seems to stimulate the rate-limiting step in phosphatidic acid formation mediated by GPAT3. Isoforms SCP2 and SCPx cooperate in peroxisomal oxidation of certain naturally occurring tetramethyl-branched fatty acyl-CoAs. The chain is Sterol carrier protein 2 from Rattus norvegicus (Rat).